The following is a 177-amino-acid chain: ATP synthase subunit delta (177 aa).

The protein belongs to the ATPase delta chain family. As to quaternary structure, F-type ATPases have 2 components, F(1) - the catalytic core - and F(0) - the membrane proton channel. F(1) has five subunits: alpha(3), beta(3), gamma(1), delta(1), epsilon(1). F(0) has three main subunits: a(1), b(2) and c(10-14). The alpha and beta chains form an alternating ring which encloses part of the gamma chain. F(1) is attached to F(0) by a central stalk formed by the gamma and epsilon chains, while a peripheral stalk is formed by the delta and b chains.

It localises to the cell inner membrane. Functionally, f(1)F(0) ATP synthase produces ATP from ADP in the presence of a proton or sodium gradient. F-type ATPases consist of two structural domains, F(1) containing the extramembraneous catalytic core and F(0) containing the membrane proton channel, linked together by a central stalk and a peripheral stalk. During catalysis, ATP synthesis in the catalytic domain of F(1) is coupled via a rotary mechanism of the central stalk subunits to proton translocation. In terms of biological role, this protein is part of the stalk that links CF(0) to CF(1). It either transmits conformational changes from CF(0) to CF(1) or is implicated in proton conduction. The protein is ATP synthase subunit delta of Shewanella piezotolerans (strain WP3 / JCM 13877).